Consider the following 205-residue polypeptide: ATP-dependent Clp protease proteolytic subunit (205 aa).

Serine 101 (nucleophile) is an active-site residue. The active site involves histidine 126.

This sequence belongs to the peptidase S14 family. In terms of assembly, component of the chloroplastic Clp protease core complex.

The protein localises to the plastid. The protein resides in the chloroplast stroma. The catalysed reaction is Hydrolysis of proteins to small peptides in the presence of ATP and magnesium. alpha-casein is the usual test substrate. In the absence of ATP, only oligopeptides shorter than five residues are hydrolyzed (such as succinyl-Leu-Tyr-|-NHMec, and Leu-Tyr-Leu-|-Tyr-Trp, in which cleavage of the -Tyr-|-Leu- and -Tyr-|-Trp bonds also occurs).. Functionally, cleaves peptides in various proteins in a process that requires ATP hydrolysis. Has a chymotrypsin-like activity. Plays a major role in the degradation of misfolded proteins. The chain is ATP-dependent Clp protease proteolytic subunit from Pinus contorta (Shore pine).